A 247-amino-acid polypeptide reads, in one-letter code: Tetraspanin-18 (247 aa).

Residues Met-1–Leu-15 lie on the Cytoplasmic side of the membrane. A helical membrane pass occupies residues Phe-16–Val-36. The Extracellular segment spans residues Asp-37–Pro-49. The helical transmembrane segment at Leu-50–Phe-70 threads the bilayer. Residues Leu-71–Cys-82 lie on the Cytoplasmic side of the membrane. The helical transmembrane segment at Leu-83–Ile-103 threads the bilayer. Over Leu-104–Gly-222 the chain is Extracellular. N-linked (GlcNAc...) asparagine glycans are attached at residues Asn-111 and Asn-129. The chain crosses the membrane as a helical span at residues Ala-223–Phe-243. Over Arg-244–Gln-247 the chain is Cytoplasmic.

This sequence belongs to the tetraspanin (TM4SF) family.

It is found in the membrane. In terms of biological role, maintains CDH6 protein and promotes CDH6-dependent adherens junctions, inhibiting neural crest migration. In Gallus gallus (Chicken), this protein is Tetraspanin-18.